The chain runs to 430 residues: Putative chloroquine resistance transporter (430 aa).

Positions 1-22 are disordered; the sequence is MLKEGSSLDLSASSSSGTLRSD. Over 1 to 53 the chain is Cytoplasmic; that stretch reads MLKEGSSLDLSASSSSGTLRSDNSFGNSPLDRITSLLILIYKSIRACFKWIYS. Low complexity predominate over residues 7–21; it reads SLDLSASSSSGTLRS. The chain crosses the membrane as a helical span at residues 54-74; that stretch reads KSFGIICILFVILDVLTTVFF. Over 75 to 88 the chain is Vacuolar; sequence KRFIDHTKNYVMFT. A helical transmembrane segment spans residues 89–109; sequence IQVIIFTFWIIVCCIAILCFL. Residues 110–122 lie on the Cytoplasmic side of the membrane; sequence FNREYMKRHFNVR. A helical membrane pass occupies residues 123–143; the sequence is PLVFLGFLDMLSTGLSANGSA. Topologically, residues 144-147 are vacuolar; sequence HTSG. A helical membrane pass occupies residues 148–168; it reads LMLVLLGQISVPLTMVSCKLI. The Cytoplasmic portion of the chain corresponds to 169-173; the sequence is LSKKY. The helical transmembrane segment at 174–194 threads the bilayer; that stretch reads HHYQYISSAIILTFAVLKPIL. Asn-195 carries N-linked (GlcNAc...) asparagine glycosylation. The Vacuolar segment spans residues 195–206; it reads NRTDTTDNRFYN. The helical transmembrane segment at 207 to 223 threads the bilayer; sequence NMLYLLASVPDSIASAL. Residues 224 to 239 are Cytoplasmic-facing; sequence REKQYTSKFFHVVKYQ. Residues 240 to 260 form a helical membrane-spanning segment; it reads FFGFLFHFFYNILYTLLFTLP. At 261–306 the chain is on the vacuolar side; it reads FNSVKGYFDSLYKLCVNGYKCIFFGVNTITENCGPTLIPTCDNCLE. Cystine bridges form between Cys-281–Cys-304 and Cys-293–Cys-301. The chain crosses the membrane as a helical span at residues 307–329; sequence AFKIYCLYILFSSAIRVAYVFIM. Residues 330–335 are Cytoplasmic-facing; that stretch reads LDGSVT. A helical membrane pass occupies residues 336–358; it reads FTLLLGTVKVPLTSIAFSLRFIA. Residues 359–364 are Vacuolar-facing; sequence GDSTTS. The helical transmembrane segment at 365–385 threads the bilayer; the sequence is FNLLDVVCFLGIVAGLLLYAL. Over 386–430 the chain is Cytoplasmic; the sequence is GSKKIQEETDLLESPLIDDAESEHELLSTGTEKLMRSEICHDLFT.

The protein belongs to the CRT-like transporter family.

The protein resides in the vacuole membrane. Nutrient transporter. Involved in maintaining the osmotic homeostasis of the digestive vacuole. The protein is Putative chloroquine resistance transporter of Theileria annulata.